Consider the following 292-residue polypeptide: Phosphatidylglycerol--prolipoprotein diacylglyceryl transferase (292 aa).

The next 3 membrane-spanning stretches (helical) occupy residues 18-38 (LFGV…GLLI), 67-87 (LLTW…VLFY), and 105-125 (GGMS…AFCL). Arg-150 serves as a coordination point for a 1,2-diacyl-sn-glycero-3-phospho-(1'-sn-glycerol). A run of 3 helical transmembrane segments spans residues 193 to 213 (QIYE…LLVW), 222 to 242 (GSVS…VEFV), and 266 to 286 (GLTM…YLIL).

The protein belongs to the Lgt family.

The protein resides in the cell inner membrane. The enzyme catalyses L-cysteinyl-[prolipoprotein] + a 1,2-diacyl-sn-glycero-3-phospho-(1'-sn-glycerol) = an S-1,2-diacyl-sn-glyceryl-L-cysteinyl-[prolipoprotein] + sn-glycerol 1-phosphate + H(+). The protein operates within protein modification; lipoprotein biosynthesis (diacylglyceryl transfer). Catalyzes the transfer of the diacylglyceryl group from phosphatidylglycerol to the sulfhydryl group of the N-terminal cysteine of a prolipoprotein, the first step in the formation of mature lipoproteins. The polypeptide is Phosphatidylglycerol--prolipoprotein diacylglyceryl transferase (Cereibacter sphaeroides (strain ATCC 17029 / ATH 2.4.9) (Rhodobacter sphaeroides)).